Consider the following 427-residue polypeptide: Cyclic 2,3-diphosphoglycerate synthetase (427 aa).

Belongs to the cyclic 2,3-diphosphoglycerate synthetase family.

The protein resides in the cytoplasm. It carries out the reaction (2R)-2,3-bisphosphoglycerate + ATP + H(+) = cyclic (2R)-2,3-bisphosphoglycerate + ADP + phosphate. Functionally, catalyzes the formation of cyclic 2,3-diphosphoglycerate (cDPG) by formation of an intramolecular phosphoanhydride bond at the expense of ATP. In Pyrococcus abyssi (strain GE5 / Orsay), this protein is Cyclic 2,3-diphosphoglycerate synthetase.